The chain runs to 1557 residues: Target of rapamycin complex 1 subunit KOG1 (1557 aa).

4 HEAT repeats span residues 548-586 (RHPPEQLPIVLQVLLSQVHRIRALVLLSRFLDLGPWAVY), 588-625 (SLSIGIFPYVLKLLQSPAPELKPILVFIWARIMSIDYK), 777-814 (CMNTGAVEILLKSLKDPVPEVRTASIFALKHFISGFQD), and 888-925 (RQEIGNLISILPLINDGSSLVRKELVVYFSHIVSRYSN). Positions 1084-1098 (SESNSDSDTQSSNTS) are enriched in low complexity. The interval 1084–1114 (SESNSDSDTQSSNTSMKSHTSKKGPSGLYLL) is disordered. 7 WD repeats span residues 1207 to 1248 (NNKS…SKFS), 1252 to 1293 (PFGT…DTFK), 1296 to 1346 (SAWR…VEVD), 1350 to 1390 (KTSS…RDSM), 1400 to 1440 (KQGV…PVES), 1452 to 1492 (SQQK…NSFK), and 1517 to 1557 (TSDA…IDYF).

Belongs to the WD repeat RAPTOR family. The target of rapamycin complex 1 (TORC1) is composed of at least KOG1, LST8, TCO89 and either TOR1 (TORC1-A) or TOR2 (TORC1-B). Interacts with PIB2; following activation of PIB2 by glutamine or cysteine. TORC1 binds to and is inhibited by FKBP-rapamycin.

It is found in the cell membrane. The protein localises to the vacuole membrane. In terms of biological role, component of TORC1, which regulates multiple cellular processes to control cell growth in response to environmental signals. Nutrient limitation and environmental stress signals cause inactivation of TORC1. Active TORC1 positively controls ribosome biogenesis via control of rRNA, ribosomal protein and tRNA gene expression, and rRNA processing. TORC1 positively controls protein biosynthesis by regulation of mRNA stability, translation initiation factor activity, and high-affinity amino acid permeases that serve to provide amino acids for use by the translation machinery. TORC1 also promotes growth by sequestering a number of nutrient and general stress-responsive transcription factors in the cytoplasm. TORC1 negatively controls macroautophagy, a process to recycle surplus cytoplasmic mass under nutrient starvation conditions. KOG1 may have a role in binding and recruiting substrates of TORC1. The protein is Target of rapamycin complex 1 subunit KOG1 (KOG1) of Saccharomyces cerevisiae (strain ATCC 204508 / S288c) (Baker's yeast).